The following is an 87-amino-acid chain: CRISPR-associated endoribonuclease Cas2 (87 aa).

Asp-8 contacts Mg(2+).

This sequence belongs to the CRISPR-associated endoribonuclease Cas2 protein family. Homodimer, forms a heterotetramer with a Cas1 homodimer. Requires Mg(2+) as cofactor.

CRISPR (clustered regularly interspaced short palindromic repeat), is an adaptive immune system that provides protection against mobile genetic elements (viruses, transposable elements and conjugative plasmids). CRISPR clusters contain sequences complementary to antecedent mobile elements and target invading nucleic acids. CRISPR clusters are transcribed and processed into CRISPR RNA (crRNA). Functions as a ssRNA-specific endoribonuclease. Involved in the integration of spacer DNA into the CRISPR cassette. This chain is CRISPR-associated endoribonuclease Cas2, found in Methanosarcina acetivorans (strain ATCC 35395 / DSM 2834 / JCM 12185 / C2A).